The sequence spans 269 residues: MTQIKLPLRSVSQINQYTKCPMAYKLARIDKVWQRPAAWLPQGTAFHAVAEAVEVWESYGMPLTLDEAKDMFRWHYANDVGAFTEETPNFEWWTWSGPYNGQRDIERRYTVGLEQVEKFFAWRGTPGQEIWVTPDGTPAIELYFEIELDGILVRGYIDAVVVVDGELRVRDYKTGNQPGDDFQLGVYALAVAMTYGVEAPKTGDYFMVGKKGKAPKPTKPYDLTKWTREAITEEFHRVEEGIAASMFDPLPEPDKCKFCDVSYSCPVFK.

The chain is Gene 69 protein (69) from Mycobacterium (Mycobacteriophage D29).